The following is a 329-amino-acid chain: Dolichyl-diphosphooligosaccharide--protein glycosyltransferase subunit MAGT1 (329 aa).

Residues 1–23 (MAGLKGLLFGGILFAMCGGLSEG) form the signal peptide. Topologically, residues 24–178 (QKKKEMVLSD…DVNIRVIRPP (155 aa)) are extracellular. The region spanning 41 to 169 (WASKRPVIRM…LARWVADRTD (129 aa)) is the Thioredoxin domain. N-linked (GlcNAc...) asparagine glycosylation occurs at Asn-65. Cys-81 and Cys-84 are disulfide-bonded. The chain crosses the membrane as a helical span at residues 179–199 (NYAGPLMLGLLLAVIGGLVYL). Residues 200–212 (RRSNLDFLNNKTG) are Cytoplasmic-facing. Residues 213–233 (WALAALCFVLAMTSGQMWNHI) form a helical membrane-spanning segment. Residues 234–258 (RGPPYAHKNPHTNQVNYIHGSSQAQ) lie on the Extracellular side of the membrane. The helical transmembrane segment at 259–279 (FVAETHIVLLFNGAVTLGMVL) threads the bilayer. At 280–294 (LHEAATSDLDVGKRK) the chain is on the cytoplasmic side. Residues 295–315 (IMCIAGITLVVIFFSWLLSVF) form a helical membrane-spanning segment. Residues 316 to 329 (RSKYHGYPYSFLMT) are Extracellular-facing.

The protein belongs to the OST3/OST6 family. Accessory component of the STT3B-containing form of the oligosaccharyltransferase (OST) complex.

It localises to the cell membrane. It is found in the endoplasmic reticulum. The protein resides in the endoplasmic reticulum membrane. It functions in the pathway protein modification; protein glycosylation. Its function is as follows. Accessory component of the STT3B-containing form of the N-oligosaccharyl transferase (OST) complex which catalyzes the transfer of a high mannose oligosaccharide from a lipid-linked oligosaccharide donor to an asparagine residue within an Asn-X-Ser/Thr consensus motif in nascent polypeptide chains. May be involved in substrate-specific N-glycosylation involving acceptor sites that are near cysteine residues. Could indirectly play a role in Mg(2+) transport in epithelial cells. This Xenopus laevis (African clawed frog) protein is Dolichyl-diphosphooligosaccharide--protein glycosyltransferase subunit MAGT1.